Consider the following 194-residue polypeptide: Small ribosomal subunit protein uS4c (194 aa).

Positions 82-143 constitute an S4 RNA-binding domain; sequence MRLDNILFRL…KQRSKALIQN (62 aa).

The protein belongs to the universal ribosomal protein uS4 family. As to quaternary structure, part of the 30S ribosomal subunit. Contacts protein S5. The interaction surface between S4 and S5 is involved in control of translational fidelity.

Its subcellular location is the plastid. It localises to the chloroplast. In terms of biological role, one of the primary rRNA binding proteins, it binds directly to 16S rRNA where it nucleates assembly of the body of the 30S subunit. Functionally, with S5 and S12 plays an important role in translational accuracy. This is Small ribosomal subunit protein uS4c (rps4) from Sisyrinchium striatum (Satin flower).